The chain runs to 72 residues: Defensin-like protein 35 (72 aa).

The first 22 residues, 1 to 22 (MASNKISFSFVLCLYMCSLLDA), serve as a signal peptide directing secretion. 3 cysteine pairs are disulfide-bonded: C32–C58, C44–C67, and C48–C69.

Belongs to the DEFL family.

The protein resides in the secreted. The chain is Defensin-like protein 35 from Arabidopsis thaliana (Mouse-ear cress).